We begin with the raw amino-acid sequence, 283 residues long: Probable aquaporin NIP4-2 (283 aa).

Met-1 is modified (N-acetylmethionine). Residues 1-21 (MTSHGEEIEDEQISRIEKGNC) are compositionally biased toward basic and acidic residues. The tract at residues 1–23 (MTSHGEEIEDEQISRIEKGNCKD) is disordered. 2 consecutive transmembrane segments (helical) span residues 51 to 71 (GTYF…LYGG) and 77 to 97 (GICV…GHIS). Positions 102 to 104 (NPA) match the NPA 1 motif. The next 3 membrane-spanning stretches (helical) occupy residues 120–140 (VPLY…TLRL), 161–181 (ALVA…GVAT), and 189–209 (LAGI…GPIS). An NPA 2 motif is present at residues 214-216 (NPA). Residues 231–251 (IWVYIVGPFVGIFAGGFVYNF) traverse the membrane as a helical segment. Ser-267 carries the phosphoserine modification.

The protein belongs to the MIP/aquaporin (TC 1.A.8) family. NIP (TC 1.A.8.12) subfamily.

The protein localises to the membrane. Functionally, aquaporins facilitate the transport of water and small neutral solutes across cell membranes. This is Probable aquaporin NIP4-2 (NIP4-2) from Arabidopsis thaliana (Mouse-ear cress).